Consider the following 633-residue polypeptide: MADQRMDISSTISDFMSPDPADLISSSLSTSGVDCNRKRKGSSTDYQLDGFPFEEGMDTDKDDQHGRLDYADQQGRIKNAREAHSQIEKRRRDKMNSFIDELASLVPTCNAMSRKLDKLTVLRMAVQHMKTLRGATNPYTEANYKPAFLSDDELKHLILRAADGFLFVVGCDRGKILFVSESVFKILNYSQNDLIGQSLFDYLHPKDIAKVKEQLSSSDTAPRERLIDAKTGLPVKTDITPGPSRLCSGARRSFFCRMKCNRPSVKVEDKDFPSTCSKKKADRKSFCTIHSTGYLKSWPPTKMGLDEDNEPDNEGCNLSCLVAIGRLHPHVVPQPVNGEIRVKPTEYVSRHAIDGKFVFVDQRATAILAYLPQELLGTSCYEYFHQDDIGHLAECHRQVLQTREKITTNCYKFKIKDGSFITLRSRWFSFMNPWTKEVEYIVSTNTVVSTSVLDSGDAAFPQLAASPHSMDSVLQAGEGGPKRSHPTVPGIPGGTRAGAGKIGRMIAEEIMEIHRIRGSSPSSCGSSPLNITSTPPPDTSSPGSKKILNGGTPDISSAGLLSGQIQDSSGYPYSDNSSILGENSHIGIDMIDNDQGSSSPSNDEAAMAVIMSLLEADAGLGGPVDFSDLPWPL.

The interval methionine 1–histidine 65 is disordered. Serine 17 bears the Phosphoserine; by GSK3-beta mark. A compositionally biased stretch (polar residues) spans isoleucine 24–valine 33. The Nuclear localization signal motif lies at asparagine 36 to glycine 41. Positions asparagine 79–leucine 132 constitute a bHLH domain. Residue serine 85 is modified to Phosphoserine. At serine 97 the chain carries Phosphoserine; by CK2. Positions leucine 149–leucine 159 match the Nuclear export signal 1 motif. One can recognise a PAS 1 domain in the interval serine 150–proline 222. A Glycyl lysine isopeptide (Lys-Gly) (interchain with G-Cter in SUMO2 and SUMO3) cross-link involves residue lysine 259. Residue lysine 266 forms a Glycyl lysine isopeptide (Lys-Gly) (interchain with G-Cter in SUMO) linkage. The PAS 2 domain occupies proline 333–arginine 403. A Nuclear export signal 2 motif is present at residues leucine 368–leucine 376. One can recognise a PAC domain in the interval threonine 408 to serine 451. Disordered regions lie at residues serine 469–alanine 499 and glycine 518–serine 578. A compositionally biased stretch (low complexity) spans glycine 518–proline 528. Lysine 545 is subject to N6-acetyllysine. The span at glycine 563–serine 578 shows a compositional bias: polar residues.

Component of the circadian clock oscillator which includes the CRY1/2 proteins, CLOCK or NPAS2, BMAL1 or BMAL2, CSNK1D and/or CSNK1E, TIMELESS and the PER1/2/3 proteins. Forms a heterodimer with CLOCK. The CLOCK-BMAL1 heterodimer is required for E-box-dependent transactivation, for CLOCK nuclear translocation and degradation, and, for phosphorylation of both CLOCK and BMAL1. Interacts with PER1, PER2, CRY1 and CRY2 and this interaction requires a translocation to the nucleus. Interaction of the CLOCK-BMAL1 heterodimer with PER or CRY inhibits transcription activation. Interacts with NPAS2. Post-translationally, ubiquitinated, leading to its proteasomal degradation. Deubiquitinated by USP9X. O-glycosylated; contains O-GlcNAc. O-glycosylation by OGT prevents protein degradation by inhibiting ubiquitination. It also stabilizes the CLOCK-BMAL1 heterodimer thereby increasing CLOCK-BMAL1-mediated transcription of genes in the negative loop of the circadian clock such as PER1/2/3 and CRY1/2. In terms of processing, acetylated on Lys-545 by CLOCK during the repression phase of the circadian cycle. Acetylation facilitates recruitment of CRY1 protein and initiates the repression phase of the circadian cycle. Acetylated at Lys-545 by KAT5 during the activation phase of the cycle, leading to recruitment of the positive transcription elongation factor b (P-TEFb) and BRD4, followed by productive elongation of circadian transcripts. Deacetylated by SIRT1, which may result in decreased protein stability. Post-translationally, phosphorylated upon dimerization with CLOCK. Phosphorylation enhances the transcriptional activity, alters the subcellular localization and decreases the stability of the CLOCK-BMAL1 heterodimer by promoting its degradation. Phosphorylation shows circadian variations in the liver with a peak between CT10 to CT14. Phosphorylation at Ser-97 by CK2 is essential for its nuclear localization, its interaction with CLOCK and controls CLOCK nuclear entry. Dephosphorylation at Ser-85 is important for dimerization with CLOCK and transcriptional activity. Sumoylated on Lys-266 upon dimerization with CLOCK. Predominantly conjugated to poly-SUMO2/3 rather than SUMO1 and the level of these conjugates undergo rhythmic variation, peaking at CT9-CT12. Sumoylation localizes it exclusively to the PML body and promotes its ubiquitination in the PML body, ubiquitin-dependent proteasomal degradation and the transcriptional activity of the CLOCK-BMAL1 heterodimer. In terms of processing, undergoes lysosome-mediated degradation in a time-dependent manner in the liver. As to expression, expressed in pineal gland and retina.

The protein localises to the nucleus. It localises to the cytoplasm. The protein resides in the PML body. In terms of biological role, transcriptional activator which forms a core component of the circadian clock. The circadian clock, an internal time-keeping system, regulates various physiological processes through the generation of approximately 24 hour circadian rhythms in gene expression, which are translated into rhythms in metabolism and behavior. It is derived from the Latin roots 'circa' (about) and 'diem' (day) and acts as an important regulator of a wide array of physiological functions including metabolism, sleep, body temperature, blood pressure, endocrine, immune, cardiovascular, and renal function. Consists of two major components: the central clock, residing in the suprachiasmatic nucleus (SCN) of the brain, and the peripheral clocks that are present in nearly every tissue and organ system. Both the central and peripheral clocks can be reset by environmental cues, also known as Zeitgebers (German for 'timegivers'). The predominant Zeitgeber for the central clock is light, which is sensed by retina and signals directly to the SCN. The central clock entrains the peripheral clocks through neuronal and hormonal signals, body temperature and feeding-related cues, aligning all clocks with the external light/dark cycle. Circadian rhythms allow an organism to achieve temporal homeostasis with its environment at the molecular level by regulating gene expression to create a peak of protein expression once every 24 hours to control when a particular physiological process is most active with respect to the solar day. Transcription and translation of core clock components (CLOCK, NPAS2, BMAL1, BMAL2, PER1, PER2, PER3, CRY1 and CRY2) plays a critical role in rhythm generation, whereas delays imposed by post-translational modifications (PTMs) are important for determining the period (tau) of the rhythms (tau refers to the period of a rhythm and is the length, in time, of one complete cycle). A diurnal rhythm is synchronized with the day/night cycle, while the ultradian and infradian rhythms have a period shorter and longer than 24 hours, respectively. Disruptions in the circadian rhythms contribute to the pathology of cardiovascular diseases, cancer, metabolic syndromes and aging. A transcription/translation feedback loop (TTFL) forms the core of the molecular circadian clock mechanism. Transcription factors, CLOCK or NPAS2 and BMAL1 or BMAL2, form the positive limb of the feedback loop, act in the form of a heterodimer and activate the transcription of core clock genes and clock-controlled genes (involved in key metabolic processes), harboring E-box elements (5'-CACGTG-3') within their promoters. The core clock genes: PER1/2/3 and CRY1/2 which are transcriptional repressors form the negative limb of the feedback loop and interact with the CLOCK|NPAS2-BMAL1|BMAL2 heterodimer inhibiting its activity and thereby negatively regulating their own expression. This heterodimer also activates nuclear receptors NR1D1/2 and RORA/B/G, which form a second feedback loop and which activate and repress BMAL1 transcription, respectively. The preferred binding motif for the CLOCK-BMAL1 heterodimer is 5'-CACGTGA-3', which contains a flanking adenine nucleotide at the 3-prime end of the canonical 6-nucleotide E-box sequence. CLOCK specifically binds to the half-site 5'-CAC-3', while BMAL1 binds to the half-site 5'-GTGA-3'. Essential for the rhythmic interaction of CLOCK with ASS1 and plays a critical role in positively regulating CLOCK-mediated acetylation of ASS1. Plays a role in protecting against lethal sepsis by limiting the expression of immune checkpoint protein CD274 in macrophages in a PKM2-dependent manner. The polypeptide is Basic helix-loop-helix ARNT-like protein 1 (BMAL1) (Gallus gallus (Chicken)).